The chain runs to 100 residues: Small ribosomal subunit protein uS14 (100 aa).

The protein belongs to the universal ribosomal protein uS14 family. In terms of assembly, part of the 30S ribosomal subunit. Contacts proteins S3 and S10.

Binds 16S rRNA, required for the assembly of 30S particles and may also be responsible for determining the conformation of the 16S rRNA at the A site. The chain is Small ribosomal subunit protein uS14 from Synechocystis sp. (strain ATCC 27184 / PCC 6803 / Kazusa).